Here is a 223-residue protein sequence, read N- to C-terminus: N-terminal Xaa-Pro-Lys N-methyltransferase 1 (223 aa).

M1 is subject to N-acetylmethionine. T2 bears the N-acetylthreonine; in N-terminal Xaa-Pro-Lys N-methyltransferase 1, N-terminally processed mark. S-adenosyl-L-methionine-binding positions include G69, R74, 91-93 (DVT), 119-120 (LQ), and Q135.

This sequence belongs to the methyltransferase superfamily. NTM1 family.

The protein resides in the nucleus. The catalysed reaction is N-terminal L-alanyl-L-prolyl-L-lysyl-[protein] + 3 S-adenosyl-L-methionine = N-terminal N,N,N-trimethyl-L-alanyl-L-prolyl-L-lysyl-[protein] + 3 S-adenosyl-L-homocysteine + 3 H(+). It carries out the reaction N-terminal L-seryl-L-prolyl-L-lysyl-[protein] + 3 S-adenosyl-L-methionine = N-terminal N,N,N-trimethyl-L-seryl-L-prolyl-L-lysyl-[protein] + 3 S-adenosyl-L-homocysteine + 3 H(+). The enzyme catalyses N-terminal L-prolyl-L-prolyl-L-lysyl-[protein] + 2 S-adenosyl-L-methionine = N-terminal N,N-dimethyl-L-prolyl-L-prolyl-L-lysyl-[protein] + 2 S-adenosyl-L-homocysteine + 2 H(+). Functionally, distributive alpha-N-methyltransferase that methylates the N-terminus of target proteins containing the N-terminal motif [Ala/Gly/Pro/Ser]-Pro-Lys when the initiator Met is cleaved. Specifically catalyzes mono-, di- or tri-methylation of the exposed alpha-amino group of the Ala, Gly or Ser residue in the [Ala/Gly/Ser]-Pro-Lys motif and mono- or di-methylation of Pro in the Pro-Pro-Lys motif. Some of the substrates may be primed by NTMT2-mediated monomethylation. Catalyzes the trimethylation of the N-terminal Gly in CENPA (after removal of Met-1). Responsible for the N-terminal methylation of KLHL31, MYL2, MYL3, RB1, RCC1, RPL23A and SET. Required during mitosis for normal bipolar spindle formation and chromosome segregation via its action on RCC1. The sequence is that of N-terminal Xaa-Pro-Lys N-methyltransferase 1 (NTMT1) from Ailuropoda melanoleuca (Giant panda).